The chain runs to 500 residues: 4-aminobutyrate aminotransferase, mitochondrial (500 aa).

A mitochondrion-targeting transit peptide spans 1–28; the sequence is MAFLLITRRLACSSQKNLHLFIPGSRYI. A [2Fe-2S] cluster-binding site is contributed by Cys163. 164–165 is a pyridoxal 5'-phosphate binding site; the sequence is GS. Residue Cys166 coordinates [2Fe-2S] cluster. Residue Arg220 participates in substrate binding. N6-succinyllysine is present on Lys231. At Lys252 the chain carries N6-acetyllysine; alternate. An N6-succinyllysine; alternate modification is found at Lys252. Lys279 and Lys318 each carry N6-acetyllysine. Position 357 is an N6-(pyridoxal phosphate)lysine (Lys357). Residue Thr381 coordinates pyridoxal 5'-phosphate. Lys413 carries the N6-acetyllysine; alternate modification. Lys413 carries the post-translational modification N6-succinyllysine; alternate. Lys452 and Lys470 each carry N6-acetyllysine.

Belongs to the class-III pyridoxal-phosphate-dependent aminotransferase family. In terms of assembly, homodimer; disulfide-linked. Pyridoxal 5'-phosphate is required as a cofactor. [2Fe-2S] cluster serves as cofactor.

The protein localises to the mitochondrion matrix. The enzyme catalyses 4-aminobutanoate + 2-oxoglutarate = succinate semialdehyde + L-glutamate. It catalyses the reaction (S)-3-amino-2-methylpropanoate + 2-oxoglutarate = 2-methyl-3-oxopropanoate + L-glutamate. Its function is as follows. Catalyzes the conversion of gamma-aminobutyrate and L-beta-aminoisobutyrate to succinate semialdehyde and methylmalonate semialdehyde, respectively. Can also convert delta-aminovalerate and beta-alanine. This is 4-aminobutyrate aminotransferase, mitochondrial from Mus musculus (Mouse).